A 321-amino-acid polypeptide reads, in one-letter code: MARRPKGRFIDGIVLLDKSTGMSSNFALQRVKRFFNANKAGHTGALDPLATGMLPVCLGEGTKFSQHLLDADKRYLVTAKLGERTDTSDSDGEVVQTRAIDFTEAQLLTALDFFRGETQQVPSMYSALKYQGQPLYKYAREGIEVPRESRPITVFELNFIGLEGDELTLDIHCSKGTYIRTIIDDLGEMLGCGAHVIMLRRTQVAQYPYARMVSLEQLEALVAQAHEQQIDPSVLLDPLLLPMDTAVADFPEVNVPDAIAPYLMQGQAVRVPVNADLKTDELVRITLGDIRRFVGIGTMNEDGLLAPKRLIVIHDEPAETD.

Catalysis depends on Asp-47, which acts as the Nucleophile.

The protein belongs to the pseudouridine synthase TruB family. Type 1 subfamily.

It carries out the reaction uridine(55) in tRNA = pseudouridine(55) in tRNA. In terms of biological role, responsible for synthesis of pseudouridine from uracil-55 in the psi GC loop of transfer RNAs. The chain is tRNA pseudouridine synthase B from Shewanella baltica (strain OS185).